A 125-amino-acid chain; its full sequence is Fatty acid-binding protein, liver-type (125 aa).

It belongs to the calycin superfamily. Fatty-acid binding protein (FABP) family.

It is found in the cytoplasm. In Takifugu rubripes (Japanese pufferfish), this protein is Fatty acid-binding protein, liver-type (fabp1).